The chain runs to 620 residues: uncharacterized protein (620 aa).

The region spanning 324–586 (RRYVTIAIIK…HPWEKGIYPT (263 aa)) is the Radical SAM core domain. Residues Cys338, Cys342, and Cys345 each contribute to the [4Fe-4S] cluster site. Lys552 is modified (N6-(pyridoxal phosphate)lysine).

It belongs to the radical SAM superfamily. KamA family. The cofactor is [4Fe-4S] cluster. It depends on pyridoxal 5'-phosphate as a cofactor.

This is an uncharacterized protein from Methanocaldococcus jannaschii (strain ATCC 43067 / DSM 2661 / JAL-1 / JCM 10045 / NBRC 100440) (Methanococcus jannaschii).